A 468-amino-acid chain; its full sequence is Gasdermin-C (468 aa).

A triggers pyroptosis region spans residues 1–230 (MSYTFDWLSK…CVILTSANTK (230 aa)).

It belongs to the gasdermin family. Homooligomer; homooligomeric ring-shaped pore complex containing 27-28 subunits when inserted in the membrane. Post-translationally, cleavage by CASP8 relieves autoinhibition by releasing the N-terminal moiety (Gasdermin-C, N-terminal) that initiates pyroptosis. In terms of processing, palmitoylated.

The protein localises to the cytoplasm. The protein resides in the cytosol. Its subcellular location is the cell membrane. With respect to regulation, the full-length protein before cleavage is inactive: intramolecular interactions between N- and C-terminal domains mediate autoinhibition in the absence of activation signal. The intrinsic pyroptosis-inducing activity is carried by the released N-terminal moiety (Gasdermin-C, N-terminal) following cleavage by caspase CASP8. Functionally, this form constitutes the precursor of the pore-forming protein: upon cleavage, the released N-terminal moiety (Gasdermin-C, N-terminal) binds to membranes and forms pores, triggering pyroptosis. Pore-forming protein that causes membrane permeabilization and pyroptosis. Produced by the cleavage of gasdermin-C by caspase CASP8 in response to death signals. After cleavage, moves to the plasma membrane where it strongly binds to membrane inner leaflet lipids. Homooligomerizes within the membrane and forms pores of 10-15 nanometers (nm) of inner diameter, triggering pyroptosis. This chain is Gasdermin-C, found in Mus musculus (Mouse).